A 550-amino-acid polypeptide reads, in one-letter code: Transcription factor 7-like 1-C (550 aa).

Gly residues predominate over residues 1–11; the sequence is MPQLNSGGGDE. The segment at 1 to 60 is interaction with CTNNB1-A; the sequence is MPQLNSGGGDELGANDELIRFKDEGEQEEKSPGEGSAEDLADVKSSLVNESENHSSDSDS. Disordered regions lie at residues 1-76, 182-206, and 390-473; these read MPQL…EKPR, GTPP…HPSE, and WSAR…SLTT. Basic and acidic residues-rich tracts occupy residues 17 to 32 and 51 to 76; these read ELIR…EKSP and SENH…EKPR. The interaction with AES and TLE4-A stretch occupies residues 108 to 311; the sequence is LGGITCPMVP…SPNLSRKSNV (204 aa). Residues 323-391 constitute a DNA-binding region (HMG box); it reads IKKPLNAFML…LHSQLYPSWS (69 aa). The segment covering 406–415 has biased composition (basic and acidic residues); that stretch reads KQSPEMENYT. The tract at residues 407 to 550 is interaction with CTBP-B; it reads QSPEMENYTK…PLSLVTRSSD (144 aa). Over residues 444-463 the composition is skewed to low complexity; sequence SPATPSAALASPAAPAATHS. Residues 464–473 are compositionally biased toward polar residues; that stretch reads EQAQPLSLTT.

Belongs to the TCF/LEF family. As to quaternary structure, interacts with csnk1e, ctnnb1-A, ctbp-B, dact1-A and gsk3b. May interact with ase and tle4-A. In terms of processing, phosphorylated. Phosphorylation by csnk1e promotes binding to ctnnb1-A while phosphorylation by gsk3b may reverse this effect.

It localises to the nucleus. Participates in the Wnt signaling pathway. Binds to DNA and acts as a repressor in the absence of ctnnb1-A and possibly ctnnb1-B, and as an activator in the presence of these proteins. Required early in development for the establishment of the dorsal body axis in response to maternal Wnt signaling. This is Transcription factor 7-like 1-C (tcf7l1-c) from Xenopus laevis (African clawed frog).